Here is a 100-residue protein sequence, read N- to C-terminus: A-type ATP synthase subunit F (100 aa).

Belongs to the V-ATPase F subunit family. As to quaternary structure, has multiple subunits with at least A(3), B(3), C, D, E, F, H, I and proteolipid K(x).

Its subcellular location is the cell membrane. Functionally, component of the A-type ATP synthase that produces ATP from ADP in the presence of a proton gradient across the membrane. This chain is A-type ATP synthase subunit F, found in Methanospirillum hungatei JF-1 (strain ATCC 27890 / DSM 864 / NBRC 100397 / JF-1).